Reading from the N-terminus, the 255-residue chain is 3-deoxy-manno-octulosonate cytidylyltransferase (255 aa).

It belongs to the KdsB family.

The protein resides in the cytoplasm. The catalysed reaction is 3-deoxy-alpha-D-manno-oct-2-ulosonate + CTP = CMP-3-deoxy-beta-D-manno-octulosonate + diphosphate. It functions in the pathway nucleotide-sugar biosynthesis; CMP-3-deoxy-D-manno-octulosonate biosynthesis; CMP-3-deoxy-D-manno-octulosonate from 3-deoxy-D-manno-octulosonate and CTP: step 1/1. The protein operates within bacterial outer membrane biogenesis; lipopolysaccharide biosynthesis. In terms of biological role, activates KDO (a required 8-carbon sugar) for incorporation into bacterial lipopolysaccharide in Gram-negative bacteria. This Thermodesulfovibrio yellowstonii (strain ATCC 51303 / DSM 11347 / YP87) protein is 3-deoxy-manno-octulosonate cytidylyltransferase.